Here is a 1262-residue protein sequence, read N- to C-terminus: Unconventional myosin-VI (1262 aa).

A Myosin N-terminal SH3-like domain is found at 2-53; sequence EDGKPVWAPHPTDGFQMGNIVDIGPDSLTIEPLNQKGKTFLALINQVFPAEE. Residues 57 to 771 enclose the Myosin motor domain; it reads KDVEDNCSLM…KFAEFDQIMK (715 aa). 151–158 is an ATP binding site; the sequence is GESGAGKT. A Phosphoserine modification is found at Ser267. Residues 273 to 317 form a responsible for slow ATPase activity region; it reads YLNRGCTRFFANKETDKQILQNRKSPEYVKAGSLKDPLLDDHGDF. A Phosphothreonine modification is found at Thr405. Phosphoserine is present on Ser604. 2 actin-binding regions span residues 651 to 673 and 665 to 672; these read LNLL…KPNL and FIRCIKPN. The segment at 782–810 is required for binding calmodulin; it reads KRVNLWLVCSRWKKVQWCSLSVIKLKNKI. The 21-residue stretch at 814-834 folds into the IQ domain; the sequence is AEACIKMQKTIRMWLCKRRHK. The three-helix bundle stretch occupies residues 835-916; sequence PRIDGLVKVG…EDLLSALQKK (82 aa). A coiled-coil region spans residues 864–984; it reads KPEVNRQIKN…EDDEKRIQAE (121 aa). The tract at residues 917-984 is SAH; that stretch reads KQQEEEAERL…EDDEKRIQAE (68 aa). Residues 933–955 are disordered; sequence MEKERKRREEDEERRRKEEEERR. Position 1025 is a phosphoserine (Ser1025). The tract at residues 1034-1253 is interaction with TAX1BP1 and CALCOCO2/NDP52; it reads LRRGPAVQAT…ESRQARPTYA (220 aa). The segment at 1084 to 1086 is interaction with OPTN; the sequence is RRL. Phosphoserine is present on Ser1123. The interaction with TOM1 stretch occupies residues 1125-1253; that stretch reads QQNPAAQLPA…ESRQARPTYA (129 aa).

Belongs to the TRAFAC class myosin-kinesin ATPase superfamily. Myosin family. In terms of assembly, homodimer; dimerization seems to implicate the unfolding of the three-helix bundle region creating an additional calmodulin binding site, and cargo binding. Able to function as a monomer under specific conditions in vitro. Forms a complex with CFTR and DAB2 in the apical membrane of epithelial cells. Component of the DISP/DOCK7-induced septin displacement complex, at least composed of DOCK7, LRCH3 and MYO6. Binding to calmodulin through a unique insert, not found in other myosins, located in the neck region between the motor domain and the IQ domain appears to contribute to the directionality reversal. This interaction occurs only if the C-terminal lobe of calmodulin is occupied by calcium. Interaction with F-actin/ACTN1 occurs only at the apical brush border domain of the proximal tubule cells. Interacts with DAB2. In vitro, the C-terminal globular tail binds a C-terminal region of DAB2. Interacts with CFTR. Interacts with CABP5. Interacts (via residues 1128-1256) with TOM1 (via residues 392-463). Interacts (via residues 1060-1285) with OPTN. Interacts (via residues 1060-1285) with TAX1BP1 and CALCOCO2/NDP52. Interacts with TOM1L2. Interacts with CLIC5; may work together in a complex which also includes RDX and MYO6 to stabilize linkages between the plasma membrane and subjacent actin cytoskeleton at the base of stereocilia. Phosphorylation in the motor domain, induced by EGF, results in translocation of MYO6 from the cell surface to membrane ruffles and affects F-actin dynamics. Phosphorylated in vitro by p21-activated kinase (PAK). As to expression, within the cochlea, expressed specifically within the sensory hair cells (at protein level). Expressed in the inner and outer plexiform layer of the retina (at protein level). Widely expressed. Expressed in the brain, kidney, liver, and testis.

The protein localises to the golgi apparatus. It localises to the trans-Golgi network membrane. Its subcellular location is the nucleus. It is found in the cytoplasm. The protein resides in the perinuclear region. The protein localises to the membrane. It localises to the clathrin-coated pit. Its subcellular location is the cytoplasmic vesicle. It is found in the clathrin-coated vesicle. The protein resides in the cell projection. The protein localises to the filopodium. It localises to the ruffle membrane. Its subcellular location is the microvillus. It is found in the cytosol. Its function is as follows. Myosins are actin-based motor molecules with ATPase activity. Unconventional myosins serve in intracellular movements. Myosin 6 is a reverse-direction motor protein that moves towards the minus-end of actin filaments. Has slow rate of actin-activated ADP release due to weak ATP binding. Functions in a variety of intracellular processes such as vesicular membrane trafficking and cell migration. Required for the structural integrity of the Golgi apparatus via the p53-dependent pro-survival pathway. Appears to be involved in a very early step of clathrin-mediated endocytosis in polarized epithelial cells. Together with TOM1, mediates delivery of endocytic cargo to autophagosomes thereby promoting autophagosome maturation and driving fusion with lysosomes. Links TOM1 with autophagy receptors, such as TAX1BP1; CALCOCO2/NDP52 and OPTN. May act as a regulator of F-actin dynamics. As part of the DISP complex, may regulate the association of septins with actin and thereby regulate the actin cytoskeleton. May play a role in transporting DAB2 from the plasma membrane to specific cellular targets. May play a role in the extension and network organization of neurites. Required for structural integrity of inner ear hair cells. Required for the correct localization of CLIC5 and RDX at the stereocilium base. Modulates RNA polymerase II-dependent transcription. This chain is Unconventional myosin-VI (Myo6), found in Mus musculus (Mouse).